The primary structure comprises 187 residues: Peptide deformylase (187 aa).

The Fe cation site is built by Cys-94 and His-136. Residue Glu-137 is part of the active site. His-140 serves as a coordination point for Fe cation.

It belongs to the polypeptide deformylase family. Fe(2+) is required as a cofactor.

It catalyses the reaction N-terminal N-formyl-L-methionyl-[peptide] + H2O = N-terminal L-methionyl-[peptide] + formate. Functionally, removes the formyl group from the N-terminal Met of newly synthesized proteins. Requires at least a dipeptide for an efficient rate of reaction. N-terminal L-methionine is a prerequisite for activity but the enzyme has broad specificity at other positions. In Chlorobaculum parvum (strain DSM 263 / NCIMB 8327) (Chlorobium vibrioforme subsp. thiosulfatophilum), this protein is Peptide deformylase.